The following is a 120-amino-acid chain: UPF0145 protein UNCMA_30400 (120 aa).

Belongs to the UPF0145 family.

The protein is UPF0145 protein UNCMA_30400 of Methanocella arvoryzae (strain DSM 22066 / NBRC 105507 / MRE50).